The sequence spans 149 residues: Calmodulin (149 aa).

EF-hand domains lie at 8–43 (EQIA…LGQN), 44–79 (PTEA…KMKD), 81–116 (DSEE…LGEK), and 117–149 (LTDE…MMSK). The Ca(2+) site is built by Asp-21, Asp-23, Asp-25, Thr-27, Glu-32, Asp-57, Asp-59, Asn-61, Thr-63, Glu-68, Asp-94, Asp-96, Asn-98, Glu-105, Asp-130, Asp-132, Asp-134, Gln-136, and Glu-141.

The protein belongs to the calmodulin family.

Functionally, calmodulin mediates the control of a large number of enzymes, ion channels and other proteins by Ca(2+). Among the enzymes to be stimulated by the calmodulin-Ca(2+) complex are a number of protein kinases and phosphatases. The polypeptide is Calmodulin (Globisporangium splendens (Leaf rot fungus)).